The sequence spans 447 residues: Signal recognition particle 54 kDa protein (447 aa).

Residues G103 to T110, D185 to R189, and T245 to D248 contribute to the GTP site.

This sequence belongs to the GTP-binding SRP family. SRP54 subfamily. In terms of assembly, part of the signal recognition particle protein translocation system, which is composed of SRP and FtsY. Archaeal SRP consists of a 7S RNA molecule of 300 nucleotides and two protein subunits: SRP54 and SRP19.

Its subcellular location is the cytoplasm. The catalysed reaction is GTP + H2O = GDP + phosphate + H(+). In terms of biological role, involved in targeting and insertion of nascent membrane proteins into the cytoplasmic membrane. Binds to the hydrophobic signal sequence of the ribosome-nascent chain (RNC) as it emerges from the ribosomes. The SRP-RNC complex is then targeted to the cytoplasmic membrane where it interacts with the SRP receptor FtsY. This Saccharolobus solfataricus (strain ATCC 35092 / DSM 1617 / JCM 11322 / P2) (Sulfolobus solfataricus) protein is Signal recognition particle 54 kDa protein.